Here is an 83-residue protein sequence, read N- to C-terminus: Toxin AahP985 (83 aa).

The first 18 residues, 1–18, serve as a signal peptide directing secretion; the sequence is MNYLVMISLALLIAGVDS. In terms of domain architecture, LCN-type CS-alpha/beta spans 20–82; sequence RDAYIAKNDN…VPIKLSGECH (63 aa). 4 disulfides stabilise this stretch: cysteine 30/cysteine 81, cysteine 34/cysteine 54, cysteine 40/cysteine 64, and cysteine 44/cysteine 66.

It belongs to the long (4 C-C) scorpion toxin superfamily. Sodium channel inhibitor family. Alpha subfamily. In terms of tissue distribution, expressed by the venom gland.

The protein resides in the secreted. Its function is as follows. Binds voltage-independently at site-3 of sodium channels (Nav) and inhibits the inactivation of the activated channels, thereby blocking neuronal transmission. The chain is Toxin AahP985 from Androctonus australis (Sahara scorpion).